A 49-amino-acid polypeptide reads, in one-letter code: Osteocalcin (49 aa).

A Gla domain is found at tyrosine 1–glycine 47. Proline 9 carries the post-translational modification Hydroxyproline. Residues glutamate 17, glutamate 21, glutamate 24, and aspartate 30 each coordinate Ca(2+). 3 positions are modified to 4-carboxyglutamate: glutamate 17, glutamate 21, and glutamate 24. Residues cysteine 23 and cysteine 29 are joined by a disulfide bond.

Belongs to the osteocalcin/matrix Gla protein family. Gamma-carboxyglutamate residues are formed by vitamin K dependent carboxylation by GGCX. These residues are essential for the binding of calcium. Decarboxylation promotes the hormone activity.

It is found in the secreted. The carboxylated form is one of the main organic components of the bone matrix, which constitutes 1-2% of the total bone protein. It acts as a negative regulator of bone formation and is required to limit bone formation without impairing bone resorption or mineralization. The carboxylated form binds strongly to apatite and calcium. Its function is as follows. The uncarboxylated form acts as a hormone secreted by osteoblasts, which regulates different cellular processes, such as energy metabolism, male fertility and brain development. Regulates of energy metabolism by acting as a hormone favoring pancreatic beta-cell proliferation, insulin secretion and sensitivity and energy expenditure. Uncarboxylated osteocalcin hormone also promotes testosterone production in the testes: acts as a ligand for G protein-coupled receptor GPRC6A at the surface of Leydig cells, initiating a signaling response that promotes the expression of enzymes required for testosterone synthesis in a CREB-dependent manner. Also acts as a regulator of brain development: osteocalcin hormone crosses the blood-brain barrier and acts as a ligand for GPR158 on neurons, initiating a signaling response that prevents neuronal apoptosis in the hippocampus, favors the synthesis of all monoamine neurotransmitters and inhibits that of gamma-aminobutyric acid (GABA). Osteocalcin also crosses the placenta during pregnancy and maternal osteocalcin is required for fetal brain development. The chain is Osteocalcin (BGLAP) from Sus scrofa (Pig).